We begin with the raw amino-acid sequence, 219 residues long: tRNA (guanine-N(7)-)-methyltransferase (219 aa).

Positions 43, 68, 101, and 124 each coordinate S-adenosyl-L-methionine. The substrate site is built by K128 and D160.

It belongs to the class I-like SAM-binding methyltransferase superfamily. TrmB family.

The enzyme catalyses guanosine(46) in tRNA + S-adenosyl-L-methionine = N(7)-methylguanosine(46) in tRNA + S-adenosyl-L-homocysteine. It functions in the pathway tRNA modification; N(7)-methylguanine-tRNA biosynthesis. Functionally, catalyzes the formation of N(7)-methylguanine at position 46 (m7G46) in tRNA. The protein is tRNA (guanine-N(7)-)-methyltransferase of Clostridium beijerinckii (strain ATCC 51743 / NCIMB 8052) (Clostridium acetobutylicum).